Reading from the N-terminus, the 504-residue chain is CaM kinase-like vesicle-associated protein (504 aa).

Positions 24 to 286 (YDLGQVVKTE…AEEAISHEWI (263 aa)) constitute a Protein kinase domain. Residues 378 to 504 (KSDDMASADR…AQESQRVETS (127 aa)) form a disordered region. Residue Ser-384 is modified to Phosphoserine. Polar residues predominate over residues 390-431 (TPATDGSATPATDGSVTPATDGSITPATDGSVTPATDRSATP). A phosphothreonine mark is found at Thr-438 and Thr-462. Residues 445–470 (TVPAAQSSAAPAAKAAATPEPAVAQP) show a composition bias toward low complexity.

This sequence belongs to the protein kinase superfamily. CAMK Ser/Thr protein kinase family. In terms of assembly, interacts with calmodulin, in the presence of calcium. The cofactor is Ca(2+). As to expression, expressed in brain and weakly in eye. Not detected in liver, kidney, spleen, thymus, bladder, aorta, lung, intestine, esophagus, stomach, skeletal muscle, heart, diaphragm, uterus, tail skin, submaxillary gland, prostate, ear, epididymis, placenta, pancreas, ovary, testis, adrenal gland, parathyroid gland, thyroid gland, pineal gland, pituitary and sciatic nerve. In adult hippocampus, predominantly expressed in caudate nucleus, cortex, hypothalamus, olfactory bulb, and midbrain and faintly in pons, brainstem and spinal cord.

The protein resides in the cell membrane. It localises to the cytoplasmic vesicle membrane. Functionally, has no detectable kinase activity in vitro. This chain is CaM kinase-like vesicle-associated protein (Camkv), found in Rattus norvegicus (Rat).